A 283-amino-acid polypeptide reads, in one-letter code: Ribosomal RNA small subunit methyltransferase A (283 aa).

Residues Asn13, Leu15, Gly39, Glu59, Asp87, and Asn108 each coordinate S-adenosyl-L-methionine.

The protein belongs to the class I-like SAM-binding methyltransferase superfamily. rRNA adenine N(6)-methyltransferase family. RsmA subfamily.

It localises to the cytoplasm. The enzyme catalyses adenosine(1518)/adenosine(1519) in 16S rRNA + 4 S-adenosyl-L-methionine = N(6)-dimethyladenosine(1518)/N(6)-dimethyladenosine(1519) in 16S rRNA + 4 S-adenosyl-L-homocysteine + 4 H(+). Its function is as follows. Specifically dimethylates two adjacent adenosines (A1518 and A1519) in the loop of a conserved hairpin near the 3'-end of 16S rRNA in the 30S particle. May play a critical role in biogenesis of 30S subunits. This Helicobacter hepaticus (strain ATCC 51449 / 3B1) protein is Ribosomal RNA small subunit methyltransferase A.